The primary structure comprises 126 residues: UPF0102 protein BCAN_A0183 (126 aa).

Belongs to the UPF0102 family.

The chain is UPF0102 protein BCAN_A0183 from Brucella canis (strain ATCC 23365 / NCTC 10854 / RM-666).